A 340-amino-acid chain; its full sequence is GTPase Obg (340 aa).

In terms of domain architecture, Obg spans 1 to 159 (MRFIDKAKIH…RWIELELKLI (159 aa)). The OBG-type G domain occupies 160-331 (ADIGIIGFPN…LIKLIAEVYE (172 aa)). Residues 166–173 (GFPNAGKS), 191–195 (FTTLT), 213–216 (DIPG), 283–286 (NKID), and 312–314 (SLV) contribute to the GTP site. Mg(2+) contacts are provided by S173 and T193.

The protein belongs to the TRAFAC class OBG-HflX-like GTPase superfamily. OBG GTPase family. In terms of assembly, monomer. It depends on Mg(2+) as a cofactor.

Its subcellular location is the cytoplasm. Functionally, an essential GTPase which binds GTP, GDP and possibly (p)ppGpp with moderate affinity, with high nucleotide exchange rates and a fairly low GTP hydrolysis rate. Plays a role in control of the cell cycle, stress response, ribosome biogenesis and in those bacteria that undergo differentiation, in morphogenesis control. The polypeptide is GTPase Obg (Persephonella marina (strain DSM 14350 / EX-H1)).